The primary structure comprises 876 residues: Ergothioneine biosynthesis protein 1 (876 aa).

An L-histidine N(alpha)-methyltransferase region spans residues 36–350 (IIDIRRVAVE…TYGNEYGLHL (315 aa)). Tyr-88 is an L-histidine binding site. 3 residues coordinate S-adenosyl-L-methionine: Gly-119, Lys-125, and Asp-146. Residues Asn-202, Tyr-242, and 315–317 (EQS) contribute to the L-histidine site. Positions 378 to 874 (ALWATWDVVT…YAWVGARVVR (497 aa)) are hercynylcysteine S-oxide synthase. Fe cation contacts are provided by His-413, His-506, and His-510. Disordered stretches follow at residues 631-650 (GTTNSVSGHHSNRTSKQQLP) and 732-761 (TNNGVEITPPSSPSSETPAESSSPSDSNTT). Low complexity predominate over residues 744–758 (PSSETPAESSSPSDS).

The protein in the N-terminal section; belongs to the methyltransferase superfamily. EgtD family. It in the C-terminal section; belongs to the EgtB family. Requires Fe(2+) as cofactor.

The protein localises to the cytoplasm. Its subcellular location is the nucleus. The catalysed reaction is L-histidine + 3 S-adenosyl-L-methionine = hercynine + 3 S-adenosyl-L-homocysteine + 3 H(+). It catalyses the reaction hercynine + L-cysteine + O2 = S-(hercyn-2-yl)-L-cysteine S-oxide + H2O. Its pathway is amino-acid biosynthesis; ergothioneine biosynthesis. Its function is as follows. Catalyzes the SAM-dependent triple methylation of the alpha-amino group of histidine to form hercynine and subsequent conjugation with cysteine and oxygen to form hercynylcysteine sulfoxide, the first two steps in the biosynthesis pathway of ergothioneine. Ergothioneine is an unusual thio-histidine betaine amino acid that acts as an antioxidant against peroxide in conidia and contributes to conidial longevity. This is Ergothioneine biosynthesis protein 1 from Neurospora crassa (strain ATCC 24698 / 74-OR23-1A / CBS 708.71 / DSM 1257 / FGSC 987).